The chain runs to 593 residues: Transcription factor ATEG_07667 (593 aa).

The zn(2)-C6 fungal-type DNA-binding region spans Cys-18 to Cys-47.

Its subcellular location is the nucleus. Functionally, transcriptional regulator that regulates both the azasperpyranone A biosynthesis clusters A and B. Specifically up-regulates the expression of the cluster A and B specific transcription factors ATEG_03638 and ATEG_07666, which in turn activate the expression of their respective clusters. The polypeptide is Transcription factor ATEG_07667 (Aspergillus terreus (strain NIH 2624 / FGSC A1156)).